We begin with the raw amino-acid sequence, 120 residues long: Aspartate 1-decarboxylase (120 aa).

Ser-24 (schiff-base intermediate with substrate; via pyruvic acid) is an active-site residue. Ser-24 carries the pyruvic acid (Ser) modification. Thr-56 is a binding site for substrate. The Proton donor role is filled by Tyr-57. 70–72 (GAA) contributes to the substrate binding site.

It belongs to the PanD family. As to quaternary structure, heterooctamer of four alpha and four beta subunits. Requires pyruvate as cofactor. Is synthesized initially as an inactive proenzyme, which is activated by self-cleavage at a specific serine bond to produce a beta-subunit with a hydroxyl group at its C-terminus and an alpha-subunit with a pyruvoyl group at its N-terminus.

It localises to the cytoplasm. It catalyses the reaction L-aspartate + H(+) = beta-alanine + CO2. Its pathway is cofactor biosynthesis; (R)-pantothenate biosynthesis; beta-alanine from L-aspartate: step 1/1. Catalyzes the pyruvoyl-dependent decarboxylation of aspartate to produce beta-alanine. The chain is Aspartate 1-decarboxylase from Pyrobaculum islandicum (strain DSM 4184 / JCM 9189 / GEO3).